The chain runs to 462 residues: L-seryl-tRNA(Sec) selenium transferase (462 aa).

Lysine 293 carries the post-translational modification N6-(pyridoxal phosphate)lysine.

Belongs to the SelA family. Requires pyridoxal 5'-phosphate as cofactor.

It is found in the cytoplasm. The catalysed reaction is L-seryl-tRNA(Sec) + selenophosphate + H(+) = L-selenocysteinyl-tRNA(Sec) + phosphate. The protein operates within aminoacyl-tRNA biosynthesis; selenocysteinyl-tRNA(Sec) biosynthesis; selenocysteinyl-tRNA(Sec) from L-seryl-tRNA(Sec) (bacterial route): step 1/1. Functionally, converts seryl-tRNA(Sec) to selenocysteinyl-tRNA(Sec) required for selenoprotein biosynthesis. In Clostridium botulinum (strain 657 / Type Ba4), this protein is L-seryl-tRNA(Sec) selenium transferase.